The sequence spans 265 residues: Ribosomal RNA small subunit methyltransferase A (265 aa).

S-adenosyl-L-methionine-binding residues include His13, Leu15, Gly40, Glu61, Asp85, and Asn103.

It belongs to the class I-like SAM-binding methyltransferase superfamily. rRNA adenine N(6)-methyltransferase family. RsmA subfamily.

Its subcellular location is the cytoplasm. The catalysed reaction is adenosine(1518)/adenosine(1519) in 16S rRNA + 4 S-adenosyl-L-methionine = N(6)-dimethyladenosine(1518)/N(6)-dimethyladenosine(1519) in 16S rRNA + 4 S-adenosyl-L-homocysteine + 4 H(+). Specifically dimethylates two adjacent adenosines (A1518 and A1519) in the loop of a conserved hairpin near the 3'-end of 16S rRNA in the 30S particle. May play a critical role in biogenesis of 30S subunits. In Bordetella bronchiseptica (strain ATCC BAA-588 / NCTC 13252 / RB50) (Alcaligenes bronchisepticus), this protein is Ribosomal RNA small subunit methyltransferase A.